Consider the following 436-residue polypeptide: Cyclin-A2-2 (436 aa).

Belongs to the cyclin family. Cyclin AB subfamily. As to expression, expressed in roots, stems, leaves, flowers and siliques.

In Arabidopsis thaliana (Mouse-ear cress), this protein is Cyclin-A2-2 (CYCA2-2).